We begin with the raw amino-acid sequence, 259 residues long: Formate channel BtFdhC (259 aa).

Residues 1-26 lie on the Cytoplasmic side of the membrane; sequence MAFHKPEQIAELVIEAGVQKVSQTLP. Residues 27–47 traverse the membrane as a helical segment; the sequence is AMLILGFLGGAFISLGFLLNI. Residues 48–66 lie on the Periplasmic side of the membrane; sequence RVLGNLPERWGSLVNVLGG. A helical transmembrane segment spans residues 67 to 97; it reads AVFPVGLMLVVLAGGELITGNMMSLSMALYA. At 98–108 the chain is on the cytoplasmic side; the sequence is KKITLVSVLNN. The helical transmembrane segment at 109 to 130 threads the bilayer; the sequence is WVWITFMNFVGAIFVAYCFGHL. Residues 131–157 are Periplasmic-facing; the sequence is GGLTEGDYLNKTVAIAEGKLHESFGRT. Residues 158-176 traverse the membrane as a helical segment; it reads LILAIGCNWLVCLALWLAY. The Cytoplasmic portion of the chain corresponds to 177–187; sequence GTSDFVGKIIG. The helical transmembrane segment at 188–216 threads the bilayer; it reads IWIPIMAFVVIGFQQVVANMFVISAVIFA. The Periplasmic portion of the chain corresponds to 217–227; that stretch reads GHLTWMDLARN. Residues 228–250 traverse the membrane as a helical segment; the sequence is FVPVFIGNVIGGAGFVGFAYFAC. Residues 251–259 lie on the Cytoplasmic side of the membrane; it reads YQKQHSNMK.

It belongs to the FNT transporter (TC 1.A.16) family.

The protein localises to the cell inner membrane. It catalyses the reaction formate(in) = formate(out). Functionally, acts as a formate transporter. In Bacillus thuringiensis, this protein is Formate channel BtFdhC.